We begin with the raw amino-acid sequence, 118 residues long: Large ribosomal subunit protein bL20 (118 aa).

It belongs to the bacterial ribosomal protein bL20 family.

Functionally, binds directly to 23S ribosomal RNA and is necessary for the in vitro assembly process of the 50S ribosomal subunit. It is not involved in the protein synthesizing functions of that subunit. The protein is Large ribosomal subunit protein bL20 of Ralstonia pickettii (strain 12J).